Reading from the N-terminus, the 109-residue chain is Small ribosomal subunit protein bS6 (109 aa).

Belongs to the bacterial ribosomal protein bS6 family.

Functionally, binds together with bS18 to 16S ribosomal RNA. The chain is Small ribosomal subunit protein bS6 from Ehrlichia canis (strain Jake).